The sequence spans 261 residues: Prostatic glandular kallikrein-6 (261 aa).

An N-terminal signal peptide occupies residues 1 to 18 (MWLLILFLILSLGWNDAA). Residues 19–24 (PPGQSR) constitute a propeptide, activation peptide. One can recognise a Peptidase S1 domain in the interval 25–258 (IIGGFNCEKN…FTSWMKKVMK (234 aa)). Disulfide bonds link C31–C173, C50–C66, C152–C219, C184–C198, and C209–C234. Residue H65 is the Charge relay system of the active site. N108 is a glycosylation site (N-linked (GlcNAc...) asparagine). The active-site Charge relay system is D120. S213 serves as the catalytic Charge relay system.

It belongs to the peptidase S1 family. Kallikrein subfamily.

The catalysed reaction is Preferential cleavage of Arg-|-Xaa bonds in small molecule substrates. Highly selective action to release kallidin (lysyl-bradykinin) from kininogen involves hydrolysis of Met-|-Xaa or Leu-|-Xaa.. Its function is as follows. Glandular kallikreins cleave Met-Lys and Arg-Ser bonds in kininogen to release Lys-bradykinin. The sequence is that of Prostatic glandular kallikrein-6 (Klk6) from Rattus norvegicus (Rat).